Here is a 116-residue protein sequence, read N- to C-terminus: NAD(P)H-quinone oxidoreductase subunit M (116 aa).

Belongs to the complex I NdhM subunit family. In terms of assembly, NDH-1 can be composed of about 15 different subunits; different subcomplexes with different compositions have been identified which probably have different functions.

It is found in the cellular thylakoid membrane. The catalysed reaction is a plastoquinone + NADH + (n+1) H(+)(in) = a plastoquinol + NAD(+) + n H(+)(out). It catalyses the reaction a plastoquinone + NADPH + (n+1) H(+)(in) = a plastoquinol + NADP(+) + n H(+)(out). In terms of biological role, NDH-1 shuttles electrons from an unknown electron donor, via FMN and iron-sulfur (Fe-S) centers, to quinones in the respiratory and/or the photosynthetic chain. The immediate electron acceptor for the enzyme in this species is believed to be plastoquinone. Couples the redox reaction to proton translocation, and thus conserves the redox energy in a proton gradient. Cyanobacterial NDH-1 also plays a role in inorganic carbon-concentration. This Synechococcus sp. (strain RCC307) protein is NAD(P)H-quinone oxidoreductase subunit M.